Reading from the N-terminus, the 1430-residue chain is 3'-5' RNA helicase YTHDC2 (1430 aa).

The interval 1–37 (MSRPSSVSPRQPAPGGGGGGGPSPCGPGGGGRAKGLK) is disordered. Positions 14–33 (PGGGGGGGPSPCGPGGGGRA) are enriched in gly residues. The 69-residue stretch at 38–106 (DIRIDEEVKI…NRYLTVKKKD (69 aa)) folds into the R3H domain. The region spanning 203-369 (VKIIKENKVV…FGSCPVIYIQ (167 aa)) is the Helicase ATP-binding domain. 216–223 (GETGSGKT) is an ATP binding site. A DEAH box motif is present at residues 316-319 (DEVH). ANK repeat units follow at residues 506 to 538 (TSAT…SKAS) and 539 to 571 (NGWM…FGNL). One can recognise a Helicase C-terminal domain in the interval 612 to 784 (LLYNICHSCD…ELCLHTKLLA (173 aa)). Phosphoserine occurs at positions 1089, 1090, and 1092. Polar residues predominate over residues 1164–1174 (EQSAGLQQPSG). Residues 1164–1288 (EQSAGLQQPS…SPSPRPNMPV (125 aa)) form a disordered region. Residues 1191–1200 (SSWRSNNSRK) are compositionally biased toward low complexity. S1202 bears the Phosphoserine mark. A compositionally biased stretch (basic and acidic residues) spans 1231–1249 (KYKDRGILHPKRGTEDRSD). The span at 1250-1264 (QSSLKSTDSSSYPSP) shows a compositional bias: low complexity. S1263, S1267, and S1281 each carry phosphoserine. The 131-residue stretch at 1288–1418 (VRYFIMKSSN…LVGEQLLQLW (131 aa)) folds into the YTH domain. RNA-binding positions include 1294–1296 (KSS), W1310, and W1360.

This sequence belongs to the DEAD box helicase family. DEAH subfamily. Interacts with MEIOC; binds transcripts that regulate the mitotic cell cycle inhibiting progression into metaphase, thereby allowing meiotic prophase to proceed normally. Interacts (via ANK repeats) with XRN1. Interacts with ZCCHC4. Associates with the small ribosomal subunit. Interacts with RBM46. Expressed in testis. Not detected in spermatogonia next to the tubule wall but is strongly expressed in spermatocytes, suggesting that it is up-regulated in germ cells upon entry into meiosis.

The protein localises to the cytoplasm. It localises to the perinuclear region. It carries out the reaction ATP + H2O = ADP + phosphate + H(+). 3'-5' RNA helicase that plays a key role in the male and female germline by promoting transition from mitotic to meiotic divisions in stem cells. Specifically recognizes and binds N6-methyladenosine (m6A)-containing RNAs, a modification present at internal sites of mRNAs and some non-coding RNAs that plays a role in the efficiency of RNA processing and stability. Essential for ensuring a successful progression of the meiotic program in the germline by regulating the level of m6A-containing RNAs. Acts by binding and promoting degradation of m6A-containing mRNAs: the 3'-5' RNA helicase activity is required for this process and RNA degradation may be mediated by XRN1 exoribonuclease. Required for both spermatogenesis and oogenesis. The polypeptide is 3'-5' RNA helicase YTHDC2 (Homo sapiens (Human)).